The chain runs to 523 residues: Xanthotoxin 5-hydroxylase CYP82C2 (523 aa).

Residues Met1 to Phe21 form a helical membrane-spanning segment. Residue Cys462 participates in heme binding.

The protein belongs to the cytochrome P450 family. Requires heme as cofactor.

Its subcellular location is the membrane. The enzyme catalyses xanthotoxin + reduced [NADPH--hemoprotein reductase] + O2 = 5-hydroxyxanthotoxin + oxidized [NADPH--hemoprotein reductase] + H2O + 2 H(+). It catalyses the reaction indole-3-carbonyl nitrile + reduced [NADPH--hemoprotein reductase] + O2 = 4-hydroxy-indole-3-carbonyl nitrile + oxidized [NADPH--hemoprotein reductase] + H2O + H(+). In terms of biological role, involved in the biosynthetic pathway to 4-hydroxyindole-3-carbonyl nitrile (4-OH-ICN), a cyanogenic metabolite required for inducible pathogen defense. Converts indole-3-carbonyl nitrile (ICN) into 4-OH-ICN. Can hydroxylate xanthotoxin (8-methoxypsoralen) to form 5-hydroxyxanthotoxin (5-hydroxy-8-methoxypsoralen) in vivo and in vitro. In Arabidopsis thaliana (Mouse-ear cress), this protein is Xanthotoxin 5-hydroxylase CYP82C2.